The sequence spans 141 residues: HTH-type transcriptional regulator LrpA (141 aa).

Residues Val2–Ser63 enclose the HTH asnC-type domain. Positions Phe21–Lys40 form a DNA-binding region, H-T-H motif.

In terms of assembly, homooctamer; tetramer of dimers.

Functionally, DNA-binding protein that negatively regulates its own transcription. Interferes with RNA polymerase (RNAP) recruitment by inhibiting the association of RNAP with the TBP-TFB promoter complex. This chain is HTH-type transcriptional regulator LrpA (lrpA), found in Pyrococcus abyssi (strain GE5 / Orsay).